Here is a 142-residue protein sequence, read N- to C-terminus: MKFLGIDYGQRRTGIAVTDAGGRMAFPRRTIAMTTRDAFFVELLGMVEVECPDAFVVGLPRLPGGEETLTTRQVRNFVERLKRRTTLPVYFMPEELSSFEAEDDLRDAGLRGRRLEAVVDQQAAVRILESFLAVPEERRSLA.

The protein belongs to the YqgF nuclease family.

It localises to the cytoplasm. In terms of biological role, could be a nuclease involved in processing of the 5'-end of pre-16S rRNA. This chain is Putative pre-16S rRNA nuclease, found in Nitratidesulfovibrio vulgaris (strain DP4) (Desulfovibrio vulgaris).